The primary structure comprises 97 residues: Protein GLUTAMINE DUMPER 7 (97 aa).

Residues 1–25 (MSLHRDSMVPVNSRLENMDSPILSK) are Extracellular-facing. Residues 26–46 (ICAWGVMLGLFALSLFAMAYA) traverse the membrane as a helical segment. At 47-97 (CYHKQTSNSCIEEKQGKKQVLKPLDMEPKIVVIMAGNENPTFFAKPTQINA) the chain is on the cytoplasmic side. A VIMAG motif is present at residues 78–82 (VIMAG).

It belongs to the GLUTAMINE DUMPER 1 (TC 9.B.60) family. As to expression, expressed in the vascular tissues, even in the minor veins of the leaves.

The protein localises to the membrane. In terms of biological role, probable subunit of an amino acid transporter involved in the regulation of the amino acid metabolism. Stimulates amino acid export by activating nonselective amino acid facilitators. In Arabidopsis thaliana (Mouse-ear cress), this protein is Protein GLUTAMINE DUMPER 7 (GDU7).